The sequence spans 309 residues: Dihydroorotate dehydrogenase B (NAD(+)), catalytic subunit (309 aa).

Residues S21 and K45–A46 each bind FMN. Residues K45 and N69 to L73 contribute to the substrate site. Positions 99 and 127 each coordinate FMN. N127 provides a ligand contact to substrate. C130 serves as the catalytic Nucleophile. K165 and I191 together coordinate FMN. N192–T193 provides a ligand contact to substrate. FMN is bound by residues G217, G243–G244, and G265–T266.

The protein belongs to the dihydroorotate dehydrogenase family. Type 1 subfamily. In terms of assembly, heterotetramer of 2 PyrK and 2 PyrD type B subunits. FMN serves as cofactor.

Its subcellular location is the cytoplasm. It catalyses the reaction (S)-dihydroorotate + NAD(+) = orotate + NADH + H(+). It functions in the pathway pyrimidine metabolism; UMP biosynthesis via de novo pathway; orotate from (S)-dihydroorotate (NAD(+) route): step 1/1. Catalyzes the conversion of dihydroorotate to orotate with NAD(+) as electron acceptor. The sequence is that of Dihydroorotate dehydrogenase B (NAD(+)), catalytic subunit (pyrD) from Bacillus cereus (strain B4264).